Here is a 111-residue protein sequence, read N- to C-terminus: UPF0145 protein RBAM_010660 (111 aa).

It belongs to the UPF0145 family.

The sequence is that of UPF0145 protein RBAM_010660 from Bacillus velezensis (strain DSM 23117 / BGSC 10A6 / LMG 26770 / FZB42) (Bacillus amyloliquefaciens subsp. plantarum).